The following is a 379-amino-acid chain: Glutamate 5-kinase (379 aa).

Lys19 contributes to the ATP binding site. Substrate-binding residues include Ser59, Asp146, and Asn158. ATP-binding positions include 178–179 and 220–226; these read TD and TGGMATK. The PUA domain maps to 285-363; sequence SGDIIIDDGA…KDIISILGHD (79 aa).

This sequence belongs to the glutamate 5-kinase family.

It is found in the cytoplasm. The catalysed reaction is L-glutamate + ATP = L-glutamyl 5-phosphate + ADP. Its pathway is amino-acid biosynthesis; L-proline biosynthesis; L-glutamate 5-semialdehyde from L-glutamate: step 1/2. Catalyzes the transfer of a phosphate group to glutamate to form L-glutamate 5-phosphate. The protein is Glutamate 5-kinase of Vibrio parahaemolyticus serotype O3:K6 (strain RIMD 2210633).